The primary structure comprises 286 residues: Shikimate dehydrogenase (NADP(+)) (286 aa).

Shikimate-binding positions include 20 to 22 (SLS) and T67. Catalysis depends on K71, which acts as the Proton acceptor. Residues N92 and D107 each coordinate shikimate. NADP(+) contacts are provided by residues 132–136 (GAGGA) and M228. Position 230 (Y230) interacts with shikimate. Position 251 (G251) interacts with NADP(+).

It belongs to the shikimate dehydrogenase family. In terms of assembly, homodimer.

The catalysed reaction is shikimate + NADP(+) = 3-dehydroshikimate + NADPH + H(+). Its pathway is metabolic intermediate biosynthesis; chorismate biosynthesis; chorismate from D-erythrose 4-phosphate and phosphoenolpyruvate: step 4/7. Functionally, involved in the biosynthesis of the chorismate, which leads to the biosynthesis of aromatic amino acids. Catalyzes the reversible NADPH linked reduction of 3-dehydroshikimate (DHSA) to yield shikimate (SA). The protein is Shikimate dehydrogenase (NADP(+)) of Geobacter metallireducens (strain ATCC 53774 / DSM 7210 / GS-15).